A 452-amino-acid chain; its full sequence is Ribosomal protein uS12 methylthiotransferase RimO (452 aa).

One can recognise an MTTase N-terminal domain in the interval 3–118 (GKIGFVSLGC…VMQAIHLHLP (116 aa)). Residues Cys12, Cys48, Cys77, Cys149, Cys153, and Cys156 each contribute to the [4Fe-4S] cluster site. The region spanning 135-381 (LTPKHYAYLK…MAKAEDISIK (247 aa)) is the Radical SAM core domain. Residues 384–452 (AKKIGKRVQV…SQGHDLIAET (69 aa)) enclose the TRAM domain.

This sequence belongs to the methylthiotransferase family. RimO subfamily. [4Fe-4S] cluster serves as cofactor.

It localises to the cytoplasm. It carries out the reaction L-aspartate(89)-[ribosomal protein uS12]-hydrogen + (sulfur carrier)-SH + AH2 + 2 S-adenosyl-L-methionine = 3-methylsulfanyl-L-aspartate(89)-[ribosomal protein uS12]-hydrogen + (sulfur carrier)-H + 5'-deoxyadenosine + L-methionine + A + S-adenosyl-L-homocysteine + 2 H(+). In terms of biological role, catalyzes the methylthiolation of an aspartic acid residue of ribosomal protein uS12. The protein is Ribosomal protein uS12 methylthiotransferase RimO of Polynucleobacter asymbioticus (strain DSM 18221 / CIP 109841 / QLW-P1DMWA-1) (Polynucleobacter necessarius subsp. asymbioticus).